The following is a 127-amino-acid chain: Venom protein family 16 protein 1 (127 aa).

An N-terminal signal peptide occupies residues 1 to 18 (MWIWYSLLFFGVCHLAHS).

As to expression, expressed by the venom gland (anterior main gland) (at protein level).

It is found in the secreted. The protein is Venom protein family 16 protein 1 of Platymeris rhadamanthus (Red spot assassin bug).